A 409-amino-acid chain; its full sequence is uncharacterized protein (409 aa).

Positions 305 to 409 constitute an HTH arsR-type domain; sequence LTKIDEKVVK…LIGEDDELEM (105 aa).

This is an uncharacterized protein from Methanocaldococcus jannaschii (strain ATCC 43067 / DSM 2661 / JAL-1 / JCM 10045 / NBRC 100440) (Methanococcus jannaschii).